The chain runs to 337 residues: 2-oxoglutarate receptor 1 (337 aa).

Over 1–37 (MIETLDSPANDSDFLDYITALENCTDEQISFKMQYLP) the chain is Extracellular. An N-linked (GlcNAc...) asparagine glycan is attached at asparagine 23. The chain crosses the membrane as a helical span at residues 38 to 58 (VIYSIIFLVGFPGNTVAISIY). Topologically, residues 59 to 69 (VFKMRPWKSST) are cytoplasmic. The helical transmembrane segment at 70-90 (IIMLNLALTDLLYLTSLPFLI) threads the bilayer. At 91–116 (HYYASGENWIFGDFMCKFIRFGFHFN) the chain is on the extracellular side. Cysteine 106 and cysteine 183 are oxidised to a cystine. Residues 117 to 137 (LYSSILFLTCFSLFRYIVIIH) form a helical membrane-spanning segment. Residues 138-151 (PMSCFSIQKTRWAV) lie on the Cytoplasmic side of the membrane. A helical transmembrane segment spans residues 152-172 (VACAGVWVISLVAVMPMTFLI). Residues 173 to 200 (TSTTRTNRSACLDLTSSDDLTTIKWYNL) are Extracellular-facing. The helical transmembrane segment at 201–221 (ILTATTFCLPLLIVTLCYTTI) threads the bilayer. Over 222 to 242 (ISTLTHGPRTHSCFKQKARRL) the chain is Cytoplasmic. Residues 243 to 263 (TILLLLVFYVCFLPFHILRVI) form a helical membrane-spanning segment. Over 264–284 (RIESRLLSISCSIESHIHEAY) the chain is Extracellular. Residues 285-305 (IVSRPLAALNTFGNLLLYVVV) form a helical membrane-spanning segment. The Cytoplasmic portion of the chain corresponds to 306-337 (SNNFQQAFCSAVRCKAIGDLEQAKKDSCSNNP).

It belongs to the G-protein coupled receptor 1 family. In terms of tissue distribution, highly expressed in mast cells and is found predominantly in the tissues of the respiratory tract and kidneys.

It localises to the cell membrane. Functionally, g protein-coupled receptor for dicarboxylates and amino dicarboxylates. Receptor for itaconate, a metabolite produced by myeloid lineages. In the respiratory epithelium, couples the binding of itaconate to the activation of GNA11 and downstream intracellular Ca(2+) release, leading to mucocilliary clearance of airborne pathogens. Receptor for leukotriene E4 (LTE4) produced by mast cells upon allergic inflammation. Binds with high affinity to LTE4 and elicits mucin release from pulmonary epithelium in response to airborne fungi allergens. Regulates mucin-producing goblet cell homeostasis. Receptor for alpha-ketoglutarate produced by proximal tubule renal cells upon metabolic alkalosis. In an intrarenal paracrine signaling pathway, binds alpha-ketoglutarate and drives transepithelial salt reabsorption and bicarbonate secretion by SLC26A4/pendrin-positive intercalated cells. This Rattus norvegicus (Rat) protein is 2-oxoglutarate receptor 1 (Oxgr1).